The primary structure comprises 415 residues: Nacrein-like protein F (415 aa).

Asparagine 27 carries an N-linked (GlcNAc...) asparagine glycan. The Alpha-carbonic anhydrase domain occupies 33-414 (AGFSYDRSIC…KNKVTVYKSF (382 aa)). Residues histidine 132, histidine 134, and histidine 157 each coordinate Zn(2+). Residues 201-297 (DEPDDEECKH…GENGHKHGCR (97 aa)) form a disordered region. The segment covering 207 to 219 (ECKHILKGHHPDN) has biased composition (basic and acidic residues). The segment covering 220–289 (NENGNGDNGN…NNGENGNNGE (70 aa)) has biased composition (low complexity). Tandem repeats lie at residues 225 to 227 (GDN), 228 to 230 (GNN), 231 to 233 (GYN), 234 to 236 (GDN), 237 to 239 (GNN), 240 to 242 (GDN), 243 to 245 (GNN), 246 to 248 (GYN), 249 to 251 (GDN), 252 to 254 (GNN), 255 to 257 (GVN), 258 to 260 (GNN), 261 to 263 (GYN), 264 to 266 (GDN), 267 to 269 (GNN), 270 to 272 (GDN), 273 to 275 (GNN), 276 to 278 (GEN), 279 to 281 (GNN), 282 to 284 (GEN), 285 to 286 (GN), and 288 to 290 (GEN). Positions 225–290 (GDNGNNGYNG…NGENGNNGEN (66 aa)) are 22 X 3 AA approximate tandem repeats of G-X-N. 355 to 356 (TT) contacts substrate.

This sequence belongs to the alpha-carbonic anhydrase family. As to quaternary structure, homooligomer; disulfide-linked. May also be disulfide-linked to insoluble organic matrix. It depends on Zn(2+) as a cofactor. Expressed in the mantle.

It is found in the secreted. The protein localises to the extracellular space. It localises to the extracellular matrix. The catalysed reaction is hydrogencarbonate + H(+) = CO2 + H2O. Acts as a negative regulator for calcification in the shells of mollusks. May function both as a calcium concentrator and as a carbonic anhydrase required for production of carbonate ions, which are assembled to CaCO(3) at mineralization sites. Is important for shell formation in both the calcitic prismatic layer and the aragonitic nacreous layer. Shows inhibitory activity of crystal formation when present in free state but, when attached to the insoluble matrix, may regulate the form and size of aragonite crystal. The chain is Nacrein-like protein F from Pinctada fucata (Akoya pearl oyster).